The chain runs to 429 residues: GTPase Obg (429 aa).

The Obg domain occupies 1-158; that stretch reads MLIDKCTLFL…IEAQFELKYI (158 aa). Residues 159–330 form the OBG-type G domain; it reads ADVGLLGLPN…LLKDIFKDYK (172 aa). GTP-binding positions include 165 to 172, 190 to 194, 211 to 214, 281 to 284, and 311 to 313; these read GLPNAGKS, FTTLS, DIPG, NKID, and SGF. Residues Ser-172 and Thr-192 each contribute to the Mg(2+) site. One can recognise an OCT domain in the interval 351–429; it reads KVEKEQEDIV…RIQDVMFEIN (79 aa).

This sequence belongs to the TRAFAC class OBG-HflX-like GTPase superfamily. OBG GTPase family. In terms of assembly, monomer. Mg(2+) serves as cofactor.

It is found in the cytoplasm. In terms of biological role, an essential GTPase which binds GTP, GDP and possibly (p)ppGpp with moderate affinity, with high nucleotide exchange rates and a fairly low GTP hydrolysis rate. Plays a role in control of the cell cycle, stress response, ribosome biogenesis and in those bacteria that undergo differentiation, in morphogenesis control. This is GTPase Obg from Malacoplasma penetrans (strain HF-2) (Mycoplasma penetrans).